Here is a 206-residue protein sequence, read N- to C-terminus: Nucleoside triphosphate pyrophosphatase (206 aa).

The Proton acceptor role is filled by aspartate 71.

The protein belongs to the Maf family. A divalent metal cation is required as a cofactor.

It is found in the cytoplasm. The enzyme catalyses a ribonucleoside 5'-triphosphate + H2O = a ribonucleoside 5'-phosphate + diphosphate + H(+). It carries out the reaction a 2'-deoxyribonucleoside 5'-triphosphate + H2O = a 2'-deoxyribonucleoside 5'-phosphate + diphosphate + H(+). Nucleoside triphosphate pyrophosphatase. May have a dual role in cell division arrest and in preventing the incorporation of modified nucleotides into cellular nucleic acids. The protein is Nucleoside triphosphate pyrophosphatase of Rippkaea orientalis (strain PCC 8801 / RF-1) (Cyanothece sp. (strain PCC 8801)).